Consider the following 464-residue polypeptide: Citrate synthase, mitochondrial (464 aa).

Residues 1–27 (MALLTAATRLLGAKNSSCLVLAARHAS) constitute a mitochondrion transit peptide. Positions 2–21 (ALLTAATRLLGAKNSSCLVL) match the SIFI-degron motif. K57 is subject to N6-succinyllysine. K76 carries the N6-acetyllysine; alternate modification. K76 carries the N6-succinyllysine; alternate modification. N6-succinyllysine is present on residues K103 and K193. S226 bears the Phosphoserine mark. Residue H301 is part of the active site. Residues K321 and K327 each carry the N6-acetyllysine; alternate modification. N6-succinyllysine; alternate is present on residues K321 and K327. Residue H347 is part of the active site. Position 356 (R356) interacts with oxaloacetate. K375 is subject to N6-acetyllysine; alternate. N6-succinyllysine; alternate is present on K375. N6-acetyllysine is present on K382. The residue at position 393 (K393) is an N6-acetyllysine; alternate. Position 393 is an N6-succinyllysine; alternate (K393). The residue at position 395 (K395) is an N6,N6,N6-trimethyllysine. D402 is a catalytic residue. Positions 428 and 448 each coordinate oxaloacetate. An N6-succinyllysine modification is found at K450. Residue K459 is modified to N6-acetyllysine; alternate. At K459 the chain carries N6-succinyllysine; alternate.

Belongs to the citrate synthase family. Homodimer. In terms of processing, methylated. Trimethylation at Lys-395 by CSKMT decreases citrate synthase activity. Post-translationally, in response to mitochondrial stress, the precursor protein is ubiquitinated by the SIFI complex in the cytoplasm before mitochondrial import, leading to its degradation. Within the SIFI complex, UBR4 initiates ubiquitin chain that are further elongated or branched by KCMF1.

The protein resides in the mitochondrion matrix. It carries out the reaction oxaloacetate + acetyl-CoA + H2O = citrate + CoA + H(+). The protein operates within carbohydrate metabolism; tricarboxylic acid cycle; isocitrate from oxaloacetate: step 1/2. Functionally, key enzyme of the Krebs tricarboxylic acid cycle which catalyzes the synthesis of citrate from acetyl coenzyme A and oxaloacetate. In Mus musculus (Mouse), this protein is Citrate synthase, mitochondrial (Cs).